A 476-amino-acid polypeptide reads, in one-letter code: Stromelysin-2 (476 aa).

The signal sequence occupies residues 1 to 17; sequence MMHLAFLVLLCLPVCSA. The propeptide at 18 to 98 is activation peptide; sequence YPLSGAAKEE…PRCGVPDVGH (81 aa). The Cysteine switch signature appears at 89 to 96; that stretch reads PRCGVPDV. 6 residues coordinate Zn(2+): C91, H167, D169, H182, H195, and H217. E218 is a catalytic residue. Residues H221 and H227 each contribute to the Zn(2+) site. 4 Hemopexin repeats span residues 286-335, 336-382, 384-432, and 433-476; these read PAKC…WPSL, PSYL…GFPP, IRKI…FPGV, and EPKV…WLHC. An intrachain disulfide couples C289 to C476.

It belongs to the peptidase M10A family. Zn(2+) is required as a cofactor. Ca(2+) serves as cofactor.

It localises to the secreted. It is found in the extracellular space. The protein localises to the extracellular matrix. The enzyme catalyses Similar to stromelysin 1, but action on collagen types III, IV and V is weak.. In terms of biological role, can degrade fibronectin, gelatins of type I, III, IV, and V; weakly collagens III, IV, and V. Activates procollagenase. The sequence is that of Stromelysin-2 (MMP10) from Homo sapiens (Human).